The following is a 180-amino-acid chain: Interleukin-17B (180 aa).

Positions 1–20 (MDWPHNLLFLLTISIFLGLG) are cleaved as a signal peptide. Residues 22–44 (PRSPKSKRKGQGRPGPLAPGPHQ) form a disordered region. An N-linked (GlcNAc...) asparagine glycan is attached at Asn-75. 2 disulfides stabilise this stretch: Cys-121–Cys-176 and Cys-126–Cys-178.

This sequence belongs to the IL-17 family. In terms of tissue distribution, expressed in adult pancreas, small intestine, stomach, spinal cord and testis. Less pronounced expression in prostate, colon mucosal lining, and ovary.

Its subcellular location is the secreted. Its function is as follows. Stimulates the release of tumor necrosis factor alpha and IL-1-beta from the monocytic cell line THP-1. This chain is Interleukin-17B (IL17B), found in Homo sapiens (Human).